We begin with the raw amino-acid sequence, 290 residues long: Fat storage-inducing transmembrane protein 1 (290 aa).

Residues 1-18 lie on the Lumenal side of the membrane; the sequence is MERGPVVGAGLGARARIR. The chain crosses the membrane as a helical span at residues 19 to 39; the sequence is TLLGCLVKVLLWVASALLYFG. The Cytoplasmic segment spans residues 40 to 54; sequence SEQAARLLGSPCLRR. A helical membrane pass occupies residues 55–75; sequence LYHAWLAAVVIFGPLLQFHVN. At 76-94 the chain is on the lumenal side; that stretch reads PRTIFASHGNFFNIKFVNS. A helical membrane pass occupies residues 95-115; it reads AWGWTCTFLGGFVLLVVFLAT. The Cytoplasmic portion of the chain corresponds to 116-141; that stretch reads RRVAVTARHLSRLVVGAAVWRGAGRA. Residues 142-162 traverse the membrane as a helical segment; sequence FLLIEDLTGSCFEPLPQGLLL. The Lumenal segment spans residues 163–187; that stretch reads HELPDRRSRLAAGHQWRGYTVSSHT. Residue histidine 186 is part of the active site. Residues 188-208 traverse the membrane as a helical segment; the sequence is FLLTFCCLLMAEEAAVFAKYL. Topologically, residues 209–220 are cytoplasmic; that stretch reads AHGLPAGAPLRL. A helical membrane pass occupies residues 221-241; sequence VFLLNVLLLGLWNFLLLCTVI. At 242–249 the chain is on the lumenal side; sequence YFHQYTHK. The active site involves histidine 244. A helical membrane pass occupies residues 250–270; it reads VVGAAVGTFAWYLTYGSWYHQ. At 271–290 the chain is on the cytoplasmic side; that stretch reads PWSPGSPGHGLFTHPSRKHN.

Belongs to the FIT family. FIT1 subfamily.

Its subcellular location is the endoplasmic reticulum membrane. In terms of biological role, plays an important role in the formation of lipid droplets (LDs) which are storage organelles at the center of lipid and energy homeostasis. Directly binds to diacylglycerol (DAGs) and triacylglycerol. In Sus scrofa (Pig), this protein is Fat storage-inducing transmembrane protein 1.